Reading from the N-terminus, the 136-residue chain is MLSTILRNNFVRRSFSSRIFSQNEYETAADSTLERLSDYFDQIADSFPVSEQFDVSHAMGVLTVNVSKSVGTYVINKQSPNKQIWLSSPMSGPKRYDLEEEGKWTYAHDGEQLDSLLNREFRKILADDRIDFSRHV.

It belongs to the frataxin family. Monomer. Oligomer.

The protein resides in the mitochondrion. It carries out the reaction 4 Fe(2+) + O2 + 4 H(+) = 4 Fe(3+) + 2 H2O. Functionally, promotes the biosynthesis of heme as well as the assembly and repair of iron-sulfur clusters by delivering Fe(2+) to proteins involved in these pathways. May play a role in the protection against iron-catalyzed oxidative stress through its ability to catalyze the oxidation of Fe(2+) to Fe(3+). May be able to store large amounts of the metal in the form of a ferrihydrite mineral by oligomerization. This is Frataxin, mitochondrial (frh-1) from Caenorhabditis elegans.